Reading from the N-terminus, the 1180-residue chain is RecBCD enzyme subunit RecB (1180 aa).

The 449-residue stretch at 2–450 (SDVAETLDPL…YTLDTNWRSA (449 aa)) folds into the UvrD-like helicase ATP-binding domain. An ATPase, DNA-binding and helicase activity, interacts with RecC region spans residues 2-853 (SDVAETLDPL…KGEPQDAAGL (852 aa)). 23–30 (ASAGTGKT) contributes to the ATP binding site. Residues 252–254 (IDR) mediate DNA binding. Residue Trp447 coordinates ATP. The region spanning 480 to 746 (SAGKNQALRF…QIVTIHKSKG (267 aa)) is the UvrD-like helicase C-terminal domain. 3 DNA-binding regions span residues 511–512 (VG), 560–561 (SR), and Arg761. The interval 900 to 1180 (NWRVTSYSGL…MFAGMTLEEA (281 aa)) is nuclease activity, interacts with RecD and RecA. Residues His956, Asp1067, Asp1080, and Tyr1081 each contribute to the Mg(2+) site. The active-site For nuclease activity is Asp1080.

The protein belongs to the helicase family. UvrD subfamily. Heterotrimer of RecB, RecC and RecD. All subunits contribute to DNA-binding. The C-terminus interacts with RecA. Interacts with YgbT (Cas1). In terms of assembly, (Microbial infection) Lambda virus GamS protein interacts with the enzyme without displacing any of the subunits. The cofactor is Mg(2+).

The enzyme catalyses Exonucleolytic cleavage (in the presence of ATP) in either 5'- to 3'- or 3'- to 5'-direction to yield 5'-phosphooligonucleotides.. It carries out the reaction Couples ATP hydrolysis with the unwinding of duplex DNA by translocating in the 3'-5' direction.. The catalysed reaction is ATP + H2O = ADP + phosphate + H(+). With respect to regulation, after reacting with DNA bearing a Chi site the holoenzyme is disassembled and loses exonuclease activity, DNA unwinding and Chi-directed DNA cleavage; RecB remains complexed with ssDNA, which may prevent holoenzyme reassembly. High levels of Mg(2+) (13 mM MgCl(2+)) or incubation with DNase allows holoenzyme reassembly, suggesting it is DNA bound to RecB that prevents reassembly. Its activity is regulated as follows. (Microbial infection) RecBCD is inhibited by the lambda virus gam protein (both GamL and GamS isoforms); in vitro a short preincubation prior to adding DNA results in maximal inhibition. Its function is as follows. A helicase/nuclease that prepares dsDNA breaks (DSB) for recombinational DNA repair. Binds to DSBs and unwinds DNA via a rapid (&gt;1 kb/second) and highly processive (&gt;30 kb) ATP-dependent bidirectional helicase. Unwinds dsDNA until it encounters a Chi (crossover hotspot instigator, 5'-GCTGGTGG-3') sequence from the 3' direction. Cuts ssDNA a few nucleotides 3' to Chi site, by nicking one strand or switching the strand degraded (depending on the reaction conditions). The properties and activities of the enzyme are changed at Chi. The Chi-altered holoenzyme produces a long 3'-ssDNA overhang which facilitates RecA-binding to the ssDNA for homologous DNA recombination and repair. Holoenzyme degrades any linearized DNA that is unable to undergo homologous recombination. In the holoenzyme this subunit contributes ATPase, 3'-5' helicase, exonuclease activity and loads RecA onto ssDNA. The RecBC complex requires the RecD subunit for nuclease activity, but can translocate along ssDNA in both directions. The RecBCD complex does not unwind G-quadruplex DNA. Probably interacts with a component of retron Ec48 which moniters RecBCD stability; when RecB is missing or impaired the retron is activated and becomes toxic. This is RecBCD enzyme subunit RecB from Escherichia coli (strain K12).